A 270-amino-acid chain; its full sequence is Acyl-[acyl-carrier-protein]--UDP-N-acetylglucosamine O-acyltransferase (270 aa).

The protein belongs to the transferase hexapeptide repeat family. LpxA subfamily. As to quaternary structure, homotrimer.

It localises to the cytoplasm. The catalysed reaction is a (3R)-hydroxyacyl-[ACP] + UDP-N-acetyl-alpha-D-glucosamine = a UDP-3-O-[(3R)-3-hydroxyacyl]-N-acetyl-alpha-D-glucosamine + holo-[ACP]. It participates in glycolipid biosynthesis; lipid IV(A) biosynthesis; lipid IV(A) from (3R)-3-hydroxytetradecanoyl-[acyl-carrier-protein] and UDP-N-acetyl-alpha-D-glucosamine: step 1/6. Involved in the biosynthesis of lipid A, a phosphorylated glycolipid that anchors the lipopolysaccharide to the outer membrane of the cell. The chain is Acyl-[acyl-carrier-protein]--UDP-N-acetylglucosamine O-acyltransferase from Helicobacter pylori (strain J99 / ATCC 700824) (Campylobacter pylori J99).